A 113-amino-acid chain; its full sequence is C-X-C motif chemokine 6 (113 aa).

Positions 1–36 (MSLLPSRAARVPGPSSSLCALLALLLLTPPGPLVSA) are cleaved as a signal peptide. 2 disulfides stabilise this stretch: C48–C74 and C50–C90.

This sequence belongs to the intercrine alpha (chemokine CxC) family.

Its subcellular location is the secreted. Functionally, chemotactic for neutrophil granulocytes. Signals through binding and activation of its receptors (CXCR1 and CXCR2). In addition to its chemotactic and angiogenic properties, it has strong antibacterial activity against Gram-positive and Gram-negative bacteria (90-fold-higher when compared to CXCL5 and CXCL7). This chain is C-X-C motif chemokine 6 (CXCL6), found in Equus caballus (Horse).